The chain runs to 112 residues: Urease subunit beta (112 aa).

The protein belongs to the urease beta subunit family. Heterotrimer of UreA (gamma), UreB (beta) and UreC (alpha) subunits. Three heterotrimers associate to form the active enzyme.

It is found in the cytoplasm. It catalyses the reaction urea + 2 H2O + H(+) = hydrogencarbonate + 2 NH4(+). The protein operates within nitrogen metabolism; urea degradation; CO(2) and NH(3) from urea (urease route): step 1/1. This chain is Urease subunit beta, found in Polaromonas sp. (strain JS666 / ATCC BAA-500).